We begin with the raw amino-acid sequence, 181 residues long: ATP-dependent protease subunit HslV (181 aa).

Residue T7 is part of the active site. Positions 164, 167, and 170 each coordinate Na(+).

It belongs to the peptidase T1B family. HslV subfamily. A double ring-shaped homohexamer of HslV is capped on each side by a ring-shaped HslU homohexamer. The assembly of the HslU/HslV complex is dependent on binding of ATP.

Its subcellular location is the cytoplasm. The catalysed reaction is ATP-dependent cleavage of peptide bonds with broad specificity.. Its activity is regulated as follows. Allosterically activated by HslU binding. In terms of biological role, protease subunit of a proteasome-like degradation complex believed to be a general protein degrading machinery. The protein is ATP-dependent protease subunit HslV of Shouchella clausii (strain KSM-K16) (Alkalihalobacillus clausii).